Here is a 150-residue protein sequence, read N- to C-terminus: SsrA-binding protein (150 aa).

The segment at Lys127–Asp150 is disordered.

Belongs to the SmpB family.

Its subcellular location is the cytoplasm. Functionally, required for rescue of stalled ribosomes mediated by trans-translation. Binds to transfer-messenger RNA (tmRNA), required for stable association of tmRNA with ribosomes. tmRNA and SmpB together mimic tRNA shape, replacing the anticodon stem-loop with SmpB. tmRNA is encoded by the ssrA gene; the 2 termini fold to resemble tRNA(Ala) and it encodes a 'tag peptide', a short internal open reading frame. During trans-translation Ala-aminoacylated tmRNA acts like a tRNA, entering the A-site of stalled ribosomes, displacing the stalled mRNA. The ribosome then switches to translate the ORF on the tmRNA; the nascent peptide is terminated with the 'tag peptide' encoded by the tmRNA and targeted for degradation. The ribosome is freed to recommence translation, which seems to be the essential function of trans-translation. This Cupriavidus necator (strain ATCC 17699 / DSM 428 / KCTC 22496 / NCIMB 10442 / H16 / Stanier 337) (Ralstonia eutropha) protein is SsrA-binding protein.